Consider the following 842-residue polypeptide: ATP-binding cassette sub-family B member 6 (842 aa).

Over 1–26 (MVTVGNYCEAEGPLGPAWAQNGLSPC) the chain is Lumenal. A required for the lysosomal targeting region spans residues 1 to 205 (MVTVGNYCEA…SGGLFILGLW (205 aa)). The segment at 1 to 236 (MVTVGNYCEA…RNQAQSTDRT (236 aa)) is required for ATPase activity. Cys8 and Cys26 are oxidised to a cystine. Residues 27–47 (FFFTLVPSTLMALGALALVLV) form a helical membrane-spanning segment. Topologically, residues 48 to 72 (LPCRRRDVPSGTEELFWAADSRVAP) are cytoplasmic. A helical membrane pass occupies residues 73–93 (YALQLFLATLQVALPLAGLAG). At 94–106 (RVGTARGVRLPGY) the chain is on the lumenal side. A helical membrane pass occupies residues 107-127 (LLLASMLGSLASACGLWLLVA). Topologically, residues 128–147 (ERRQARQSLAMGVWMKFRHS) are cytoplasmic. Residues 148-168 (SGLLLLWTVAFAAENLALVSW) form a helical membrane-spanning segment. The Lumenal segment spans residues 169 to 185 (NSPQWWWARADLGQQVQ). The helical transmembrane segment at 186–206 (FGLWVLRYVISGGLFILGLWA) threads the bilayer. Over 207–263 (PGLRPQSYTLRVHEADQDVERNQAQSTDRTSTWRDLGRKLRLLSSYLWPRGSPALQF) the chain is Cytoplasmic. A helical membrane pass occupies residues 264-284 (IVLICLGLMGLDRALNVLVPI). In terms of domain architecture, ABC transmembrane type-1 spans 265–556 (VLICLGLMGL…FGTYYRMIQT (292 aa)). The Lumenal portion of the chain corresponds to 285–305 (FYRDIVNLLTSKAPWSSLAWT). A helical membrane pass occupies residues 306–326 (VTTYVFLKFLQGGGTGSTGFV). Over 327-375 (SNLRTFLWIRVQQFTSRGVELRLFSHLHELSLRWHLGRRTGEVLRVVDR) the chain is Cytoplasmic. The helical transmembrane segment at 376–396 (GTSSVTGLLSYLVFNIIPTLA) threads the bilayer. Position 397 (Asp397) is a topological domain, lumenal. The helical transmembrane segment at 398–418 (IIIGIIYFSMFFNAWFGLIVF) threads the bilayer. Over 419 to 499 (LCMSLYLFLT…SSASLVVLNQ (81 aa)) the chain is Cytoplasmic. A helical membrane pass occupies residues 500–520 (TQNLVIGLGLLAGSLLCAYFV). At 521–529 (SEQKLQVGD) the chain is on the lumenal side. Residues 530 to 550 (FVLFGTYITQLYMPLNWFGTY) traverse the membrane as a helical segment. At 551–842 (YRMIQTNFID…SEDSKPQDIA (292 aa)) the chain is on the cytoplasmic side. The region spanning 590-824 (IEFENVHFSY…GGVYAEMWQL (235 aa)) is the ABC transporter domain. 623 to 630 (GPSGAGKS) provides a ligand contact to ATP.

Belongs to the ABC transporter superfamily. ABCB family. Heavy Metal importer (TC 3.A.1.210) subfamily. In terms of assembly, homodimer. Post-translationally, N-glycosylated. As to expression, highly expressed in the liver, adrenal glands, and testis.

The protein localises to the cell membrane. It is found in the mitochondrion outer membrane. It localises to the endoplasmic reticulum membrane. Its subcellular location is the golgi apparatus membrane. The protein resides in the endosome membrane. The protein localises to the lysosome membrane. It is found in the late endosome membrane. It localises to the early endosome membrane. Its subcellular location is the secreted. The protein resides in the extracellular exosome. The protein localises to the mitochondrion. It is found in the endosome. It localises to the multivesicular body membrane. Its subcellular location is the melanosome membrane. It catalyses the reaction heme b(in) + ATP + H2O = heme b(out) + ADP + phosphate + H(+). The enzyme catalyses coproporphyrin III(in) + ATP + H2O = coproporphyrin III(out) + ADP + phosphate + H(+). It carries out the reaction pheophorbide a(in) + ATP + H2O = pheophorbide a(out) + ADP + phosphate + H(+). The catalysed reaction is coproporphyrinogen III(in) + ATP + H2O = coproporphyrinogen III(out) + ADP + phosphate + H(+). It catalyses the reaction protoporphyrin IX(in) + ATP + H2O = protoporphyrin IX(out) + ADP + phosphate + H(+). The enzyme catalyses coproporphyrin I(in) + ATP + H2O = coproporphyrin I(out) + ADP + phosphate + H(+). It carries out the reaction uroporphyrin I(in) + ATP + H2O = uroporphyrin I(out) + ADP + phosphate + H(+). The catalysed reaction is uroporphyrin III(in) + ATP + H2O = uroporphyrin III(out) + ADP + phosphate + H(+). In terms of biological role, ATP-dependent transporter that catalyzes the transport of a broad-spectrum of porphyrins from the cytoplasm to the extracellular space through the plasma membrane or into the vesicle lumen. May also function as an ATP-dependent importer of porphyrins from the cytoplasm into the mitochondria, in turn may participate in the de novo heme biosynthesis regulation and in the coordination of heme and iron homeostasis during phenylhydrazine stress. May also play a key role in the early steps of melanogenesis producing PMEL amyloid fibrils. In vitro, it confers to cells a resistance to toxic metal such as arsenic and cadmium and against chemotherapeutics agent such as 5-fluorouracil, SN-38 and vincristin. In addition may play a role in the transition metal homeostasis. The protein is ATP-binding cassette sub-family B member 6 of Mesocricetus auratus (Golden hamster).